A 311-amino-acid chain; its full sequence is Homeobox-leucine zipper protein HOX13 (311 aa).

The disordered stretch occupies residues 1 to 74 (MKRPTSSSRK…PSCGLGEKKR (74 aa)). A compositionally biased stretch (acidic residues) spans 35 to 54 (DEAEMEEVDEEEEEEVDEDM). A DNA-binding region (homeobox) is located at residues 69–128 (LGEKKRRLALEQVRALERSFDTDNKLDPDRKARIARDLGLQPRQVAVWFQNRRARWKTKQ). Residues 127–171 (KQLERDFAALRARHDALRADCDALRRDKDALAAEIRELREKLPTK) are leucine-zipper.

The protein belongs to the HD-ZIP homeobox family. Class I subfamily. Expressed in seedlings, roots, stems, leaf sheaths and blades and panicles.

The protein resides in the nucleus. Functionally, probable transcription factor. This chain is Homeobox-leucine zipper protein HOX13 (HOX13), found in Oryza sativa subsp. japonica (Rice).